Consider the following 575-residue polypeptide: uncharacterized protein (575 aa).

The disordered stretch occupies residues 507–536; it reads AHRKVGELNNKKPMTGEKPPPKNKKSPKYK.

This is an uncharacterized protein from Ostreid herpesvirus 1 (isolate France) (OsHV-1).